Consider the following 260-residue polypeptide: Protein-L-isoaspartate O-methyltransferase (260 aa).

The segment at 1–27 (MKSPVAGAVLDPSTPPPTTGTSWRWPG) is disordered. The active site involves S92.

This sequence belongs to the methyltransferase superfamily. L-isoaspartyl/D-aspartyl protein methyltransferase family.

It is found in the cytoplasm. It carries out the reaction [protein]-L-isoaspartate + S-adenosyl-L-methionine = [protein]-L-isoaspartate alpha-methyl ester + S-adenosyl-L-homocysteine. In terms of biological role, catalyzes the methyl esterification of L-isoaspartyl residues in peptides and proteins that result from spontaneous decomposition of normal L-aspartyl and L-asparaginyl residues. It plays a role in the repair and/or degradation of damaged proteins. The protein is Protein-L-isoaspartate O-methyltransferase (pcm) of Aeropyrum pernix (strain ATCC 700893 / DSM 11879 / JCM 9820 / NBRC 100138 / K1).